An 804-amino-acid chain; its full sequence is Leucine--tRNA ligase (804 aa).

The short motif at 40-51 (PYPSGQGLHVGH) is the 'HIGH' region element. The 'KMSKS' region signature appears at 576–580 (KMSKS). Residue lysine 579 coordinates ATP.

The protein belongs to the class-I aminoacyl-tRNA synthetase family.

The protein localises to the cytoplasm. The enzyme catalyses tRNA(Leu) + L-leucine + ATP = L-leucyl-tRNA(Leu) + AMP + diphosphate. The polypeptide is Leucine--tRNA ligase (Enterococcus faecalis (strain ATCC 700802 / V583)).